Reading from the N-terminus, the 1281-residue chain is Zinc finger transcription factor Trps1 (1281 aa).

The interval 1-198 (MVRKKNPPLR…VPSDGGVRLN (198 aa)) is disordered. Lys-29 participates in a covalent cross-link: Glycyl lysine isopeptide (Lys-Gly) (interchain with G-Cter in SUMO2). Residues 40 to 49 (DQMSENTDQS) are compositionally biased toward polar residues. The segment covering 53 to 63 (ELNHKEEHSLH) has biased composition (basic and acidic residues). Lys-76 participates in a covalent cross-link: Glycyl lysine isopeptide (Lys-Gly) (interchain with G-Cter in SUMO2). Phosphoserine is present on residues Ser-90 and Ser-127. A compositionally biased stretch (basic and acidic residues) spans 148-162 (LETKEDQKMSPKATE). The span at 163–189 (ETGQAQSGQANCQGLSPVSVASKNPQV) shows a compositional bias: polar residues. 2 positions are modified to phosphoserine: Ser-178 and Ser-216. The C2H2-type 1; atypical zinc-finger motif lies at 222–247 (FKCNICGYGYYGNDPTDLIKHFRKYH). Lys-263 participates in a covalent cross-link: Glycyl lysine isopeptide (Lys-Gly) (interchain with G-Cter in SUMO2). The C2H2-type 2; atypical zinc finger occupies 333–358 (FRCKFCNFTYMGNSSTELEQHFLQTH). Residues 365-394 (SLPSSEVAKPSEKNSNKSIPALQSSDSGDL) are disordered. A compositionally biased stretch (polar residues) spans 380 to 391 (NKSIPALQSSDS). Residues Lys-418, Lys-457, Lys-474, and Lys-488 each participate in a glycyl lysine isopeptide (Lys-Gly) (interchain with G-Cter in SUMO2) cross-link. Residues 483–512 (QNDLAKSSEGETMTKTDKSSSGAKKKDFSS) are disordered. Over residues 488–512 (KSSEGETMTKTDKSSSGAKKKDFSS) the composition is skewed to basic and acidic residues. Residues 614 to 637 (HQCHQCSFTTPDVDVLLFHYESVH) form a C2H2-type 3; atypical zinc finger. Residues 635 to 819 (SVHESQASDV…SLGLLTPVSG (185 aa)) form a mediates interaction with GLI3 region. Lys-645 is covalently cross-linked (Glycyl lysine isopeptide (Lys-Gly) (interchain with G-Cter in SUMO2)). 2 C2H2-type zinc fingers span residues 666-689 (HSCT…RRAH) and 692-715 (YKCR…NTVH). Residue Lys-737 forms a Glycyl lysine isopeptide (Lys-Gly) (interchain with G-Cter in SUMO2) linkage. Thr-751 carries the phosphothreonine modification. Lys-755 participates in a covalent cross-link: Glycyl lysine isopeptide (Lys-Gly) (interchain with G-Cter in SUMO2). Residue Lys-766 forms a Glycyl lysine isopeptide (Lys-Gly) (interchain with G-Cter in SUMO1); alternate linkage. Residue Lys-766 forms a Glycyl lysine isopeptide (Lys-Gly) (interchain with G-Cter in SUMO2); alternate linkage. Residues Lys-825, Lys-850, Lys-877, and Lys-879 each participate in a glycyl lysine isopeptide (Lys-Gly) (interchain with G-Cter in SUMO2) cross-link. A disordered region spans residues 856 to 887 (APAGGEKSGALPQQYPASGENKSKDESQSLLR). The GATA-type zinc finger occupies 896-920 (CANCLTTKTSLWRKNANGGYVCNAC). Glycyl lysine isopeptide (Lys-Gly) (interchain with G-Cter in SUMO2) cross-links involve residues Lys-925, Lys-937, and Lys-965. The span at 961 to 977 (EQLNKQQRGSNEEQVNG) shows a compositional bias: polar residues. A disordered region spans residues 961 to 1000 (EQLNKQQRGSNEEQVNGSPLERRSEDHLTESHQREIPLPS). Phosphoserine is present on Ser-978. A compositionally biased stretch (basic and acidic residues) spans 980–995 (LERRSEDHLTESHQRE). The tract at residues 985–1184 (EDHLTESHQR…PTANGASKEK (200 aa)) is mediates interaction with RNF4. Glycyl lysine isopeptide (Lys-Gly) (interchain with G-Cter in SUMO2) cross-links involve residues Lys-1003, Lys-1012, Lys-1030, and Lys-1040. The segment at 1039–1080 (IKSPQESTGDPGNSSSVSEGKGSSERGSPIEKYMRPAKHPNY) is disordered. Residues 1040–1049 (KSPQESTGDP) are compositionally biased toward polar residues. Ser-1041 is subject to Phosphoserine. A compositionally biased stretch (low complexity) spans 1050 to 1059 (GNSSSVSEGK). The segment covering 1060-1072 (GSSERGSPIEKYM) has biased composition (basic and acidic residues). Ser-1066 bears the Phosphoserine mark. Lys-1070 is covalently cross-linked (Glycyl lysine isopeptide (Lys-Gly) (interchain with G-Cter in SUMO2)). Ser-1085 bears the Phosphoserine mark. Residues 1163-1281 (PLDLAIKHSR…QVEKNGKPKE (119 aa)) form a transcriptional repressor domain region. The segment at 1168 to 1196 (IKHSRPGPTANGASKEKTKAPPNVKNEGP) is disordered. Residues Lys-1192 and Lys-1201 each participate in a glycyl lysine isopeptide (Lys-Gly) (interchain with G-Cter in SUMO2); alternate cross-link. Residues Lys-1192 and Lys-1201 each participate in a glycyl lysine isopeptide (Lys-Gly) (interchain with G-Cter in SUMO); alternate cross-link. Lys-1201 is covalently cross-linked (Glycyl lysine isopeptide (Lys-Gly) (interchain with G-Cter in SUMO1); alternate). C2H2-type zinc fingers lie at residues 1215 to 1237 (TKCV…MSCH) and 1243 to 1267 (FQCS…RGLH).

Interacts with RNF4; regulates TRPS1 repressor activity. Interacts specifically with the activator form of GLI3 (GLI3A) but not with the repressor form (GLI3R). Post-translationally, sumoylated. Sumoylation in the repressor domain inhibits the transcription repression activity. Sumoylation on Lys-1201 is the major site. Appears to be sumoylated on multiple sites. As to expression, ubiquitously expressed in the adult. Found in fetal brain, lung, kidney, liver, spleen and thymus. More highly expressed in androgen-dependent than in androgen-independent prostate cancer cells.

The protein localises to the nucleus. Transcriptional repressor. Binds specifically to GATA sequences and represses expression of GATA-regulated genes at selected sites and stages in vertebrate development. Regulates chondrocyte proliferation and differentiation. Executes multiple functions in proliferating chondrocytes, expanding the region of distal chondrocytes, activating proliferation in columnar cells and supporting the differentiation of columnar into hypertrophic chondrocytes. This Homo sapiens (Human) protein is Zinc finger transcription factor Trps1 (TRPS1).